A 243-amino-acid polypeptide reads, in one-letter code: Orotidine 5'-phosphate decarboxylase (243 aa).

Residues D16, K38, 65–74 (DLKLHDIPNT), T120, R181, Q190, G210, and R211 contribute to the substrate site. The Proton donor role is filled by K67.

This sequence belongs to the OMP decarboxylase family. Type 1 subfamily. As to quaternary structure, homodimer.

It carries out the reaction orotidine 5'-phosphate + H(+) = UMP + CO2. Its pathway is pyrimidine metabolism; UMP biosynthesis via de novo pathway; UMP from orotate: step 2/2. Functionally, catalyzes the decarboxylation of orotidine 5'-monophosphate (OMP) to uridine 5'-monophosphate (UMP). This Bradyrhizobium sp. (strain BTAi1 / ATCC BAA-1182) protein is Orotidine 5'-phosphate decarboxylase.